The sequence spans 339 residues: GTPase Era (339 aa).

The 45-residue stretch at 4–48 (RHLAKFAYREEFKGDTEALAAAVREDASTGSTSQLPLEVQFGKMS) folds into the RPE1 insert domain. The region spanning 51–220 (KTVSVCIIGR…ITSKAKISPW (170 aa)) is the Era-type G domain. Residues 59-66 (GRPNSGKS) are G1. Residue 59 to 66 (GRPNSGKS) participates in GTP binding. A G2 region spans residues 85-89 (QTTRS). The tract at residues 106 to 109 (DTPG) is G3. GTP-binding positions include 106-110 (DTPGI) and 168-171 (NKID). Positions 168-171 (NKID) are G4. Positions 196 to 198 (ISA) are G5. In terms of domain architecture, KH type-2 spans 248–325 (LQKELPYKLT…HLFLFVKVRE (78 aa)).

Belongs to the TRAFAC class TrmE-Era-EngA-EngB-Septin-like GTPase superfamily. Era GTPase family. Monomer.

Its subcellular location is the cytoplasm. The protein resides in the cell inner membrane. Functionally, an essential GTPase that binds both GDP and GTP, with rapid nucleotide exchange. Plays a role in 16S rRNA processing and 30S ribosomal subunit biogenesis and possibly also in cell cycle regulation and energy metabolism. The sequence is that of GTPase Era from Rickettsia conorii (strain ATCC VR-613 / Malish 7).